We begin with the raw amino-acid sequence, 3110 residues long: Huntingtin (3110 aa).

Residues 1–58 (MKAFESLKSFQQQQQQQQPPPQPPPPPPPPPQPPQPPPQGQPPPPPPLPGPAEEPLHR) are disordered. The residue at position 2 (Lys2) is an N6-acetyllysine. Over residues 18–52 (QPPPQPPPPPPPPPQPPQPPPQGQPPPPPPLPGPA) the composition is skewed to pro residues. N6-acetyllysine is present on residues Lys146 and Lys204. HEAT repeat units lie at residues 174–211 (PYLV…SFGN) and 216–253 (NEIK…HSRR). Lys313 carries the N6-acetyllysine modification. Ser387, Ser389, and Ser402 each carry phosphoserine. N6-acetyllysine is present on Lys412. Positions 462-473 (GHDIITEQPRSQ) are interaction with ZDHHC17. The interval 487 to 549 (DLTSAATDGD…PDSAVTPSDS (63 aa)) is disordered. Over residues 521–549 (DGTQASSPISDSSQTTTEGPDSAVTPSDS) the composition is skewed to polar residues. Gly522 carries N-myristoyl glycine lipidation. 2 positions are modified to phosphoserine: Ser611 and Ser614. HEAT repeat units follow at residues 773 to 810 (FSLV…SLCS) and 873 to 911 (KLQE…KLFY). The interval 1137-1195 (KAALPSLTNPPSLSPIRRKGKEKEPGEQTSTPMSPKKGGEASTASRQSDTSGPVTASKS) is disordered. Positions 1140 to 1151 (LPSLTNPPSLSP) are enriched in low complexity. Residues Ser1150 and Ser1170 each carry the phosphoserine; by CDK5 modification. Positions 1178–1195 (STASRQSDTSGPVTASKS) are enriched in polar residues. Residues 1395–1432 (LFEPLVIKALKQYTTTTSVQLQKQVLDLLAQLVQLRVN) form an HEAT 5 repeat. Ser1845 carries the phosphoserine modification. A Nuclear export signal motif is present at residues 2363 to 2372 (IVVSLARLPL). The segment at 2601 to 2628 (EEEWDEEEEEEADAPAPTSPPVSPVNSR) is disordered. Residues 2602–2613 (EEWDEEEEEEAD) show a composition bias toward acidic residues.

Belongs to the huntingtin family. Interacts with PFN1. Interacts through its N-terminus with PRPF40A. Interacts with PQBP1. Interacts with SETD2. Interacts with SH3GLB1. Interacts with SYVN. Interacts with TPR; the interaction is inhibited by forms of Huntingtin with expanded polyglutamine stretch. Interacts with ZDHHC13 (via ANK repeats). Interacts with ZDHHC17 (via ANK repeats). Interacts with F8A1/F8A2/F8A3. Found in a complex with F8A1/F8A2/F8A3, HTT and RAB5A; mediates the recruitment of HTT by RAB5A. Phosphorylation at Ser-1150 and Ser-1170 by CDK5 in response to DNA damage in nuclei of neurons protects neurons against polyglutamine expansion as well as DNA damage mediated toxicity. In terms of processing, cleaved by caspases downstream of the polyglutamine stretch. Post-translationally, myristoylated at Gly-522, following proteolytic cleavage at Asp-521. In terms of tissue distribution, expressed to a high degree in all the regions of the brain of adults and in meiotic cells of the testis. In addition, very low levels are detected in various non-neuronal tissues (heart, muscle, liver, lung and kidney).

The protein localises to the cytoplasm. It is found in the nucleus. The protein resides in the cytoplasmic vesicle. It localises to the autophagosome. Its function is as follows. May play a role in microtubule-mediated transport or vesicle function. Functionally, promotes the formation of autophagic vesicles. This is Huntingtin (Htt) from Rattus norvegicus (Rat).